A 248-amino-acid chain; its full sequence is 2,3-bisphosphoglycerate-dependent phosphoglycerate mutase (248 aa).

Residues 8-15 (RHGESEWN), 21-22 (TG), Arg60, 87-90 (ERHY), Lys98, 114-115 (RR), and 183-184 (GN) contribute to the substrate site. The active-site Tele-phosphohistidine intermediate is the His9. Residue Glu87 is the Proton donor/acceptor of the active site.

This sequence belongs to the phosphoglycerate mutase family. BPG-dependent PGAM subfamily.

It catalyses the reaction (2R)-2-phosphoglycerate = (2R)-3-phosphoglycerate. It functions in the pathway carbohydrate degradation; glycolysis; pyruvate from D-glyceraldehyde 3-phosphate: step 3/5. Functionally, catalyzes the interconversion of 2-phosphoglycerate and 3-phosphoglycerate. The chain is 2,3-bisphosphoglycerate-dependent phosphoglycerate mutase from Borrelia turicatae (strain 91E135).